The following is a 114-amino-acid chain: Integration host factor subunit alpha (114 aa).

The protein belongs to the bacterial histone-like protein family. As to quaternary structure, heterodimer of an alpha and a beta chain.

This protein is one of the two subunits of integration host factor, a specific DNA-binding protein that functions in genetic recombination as well as in transcriptional and translational control. This chain is Integration host factor subunit alpha, found in Afipia carboxidovorans (strain ATCC 49405 / DSM 1227 / KCTC 32145 / OM5) (Oligotropha carboxidovorans).